The chain runs to 168 residues: uncharacterized protein (168 aa).

Residues 1–15 (MKEASDREEAPKMVE) show a composition bias toward basic and acidic residues. The disordered stretch occupies residues 1-36 (MKEASDREEAPKMVEKNYSTGFRKAHGEKDQSVTKP).

The protein resides in the cytoplasm. This is an uncharacterized protein from Saccharomyces cerevisiae (strain ATCC 204508 / S288c) (Baker's yeast).